Consider the following 111-residue polypeptide: UPF0060 membrane protein CPR_1507 (111 aa).

A run of 4 helical transmembrane segments spans residues 7-27 (IFYFLLAGVFEIGGGYLIWLW), 33-53 (SLIYGIIGALVLILYGIIPTL), 60-80 (FGRVYATYGGIFIVLSILCGW), and 85-105 (IIPDKFDLIGGFIALIGVLII).

The protein belongs to the UPF0060 family.

Its subcellular location is the cell membrane. In Clostridium perfringens (strain SM101 / Type A), this protein is UPF0060 membrane protein CPR_1507.